Here is a 334-residue protein sequence, read N- to C-terminus: Cobalt-precorrin-5B C(1)-methyltransferase (334 aa).

The protein belongs to the CbiD family.

The enzyme catalyses Co-precorrin-5B + S-adenosyl-L-methionine = Co-precorrin-6A + S-adenosyl-L-homocysteine. The protein operates within cofactor biosynthesis; adenosylcobalamin biosynthesis; cob(II)yrinate a,c-diamide from sirohydrochlorin (anaerobic route): step 6/10. Its function is as follows. Catalyzes the methylation of C-1 in cobalt-precorrin-5B to form cobalt-precorrin-6A. The protein is Cobalt-precorrin-5B C(1)-methyltransferase of Methanoregula boonei (strain DSM 21154 / JCM 14090 / 6A8).